The chain runs to 477 residues: Protoporphyrinogen oxidase (477 aa).

Residues 9-14 (GGGISG), tryptophan 42, 57-60 (GPRG), valine 257, alanine 449, and 454-456 (VAV) each bind FAD.

Belongs to the protoporphyrinogen/coproporphyrinogen oxidase family. Protoporphyrinogen oxidase subfamily. As to quaternary structure, monomer. Homodimer. FAD is required as a cofactor.

Its subcellular location is the mitochondrion inner membrane. It catalyses the reaction protoporphyrinogen IX + 3 O2 = protoporphyrin IX + 3 H2O2. It functions in the pathway porphyrin-containing compound metabolism; protoporphyrin-IX biosynthesis; protoporphyrin-IX from protoporphyrinogen-IX: step 1/1. Catalyzes the 6-electron oxidation of protoporphyrinogen-IX to form protoporphyrin-IX. The polypeptide is Protoporphyrinogen oxidase (PPOX) (Macaca fascicularis (Crab-eating macaque)).